A 127-amino-acid chain; its full sequence is Cuticle protein 4 (127 aa).

Residue Gln-1 is modified to Pyrrolidone carboxylic acid. 2 consecutive repeat copies span residues Pro-31 to Ile-39 and Pro-84 to Ile-92.

This chain is Cuticle protein 4, found in Blaberus craniifer (Death's head cockroach).